Consider the following 448-residue polypeptide: Bifunctional F420 biosynthesis protein FbiB (448 aa).

The interval 1–244 is coenzyme F420:L-glutamate ligase; that stretch reads MTGPEHGSAS…PGANDLFWLG (244 aa). Residues 20–23, serine 50, and lysine 55 contribute to the GTP site; that span reads LPEF. A divalent metal cation is bound at residue aspartate 109. Asparagine 112 provides a ligand contact to GTP. A divalent metal cation is bound by residues aspartate 150 and threonine 151. Residues 245–448 are dehydro-coenzyme F420-0 reductase; it reads TAEALELGRQ…VPAADLLILK (204 aa). FMN is bound by residues 260-264 and alanine 288; that span reads RRSVR. Aspartate 320 is a binding site for coenzyme F420-(gamma-Glu)n. Glycine 399 and arginine 436 together coordinate FMN.

The protein in the N-terminal section; belongs to the CofE family. The cofactor is Mg(2+). It depends on Mn(2+) as a cofactor. K(+) serves as cofactor.

It carries out the reaction oxidized coenzyme F420-0 + GTP + L-glutamate = oxidized coenzyme F420-1 + GDP + phosphate + H(+). The catalysed reaction is oxidized coenzyme F420-1 + GTP + L-glutamate = oxidized coenzyme F420-2 + GDP + phosphate + H(+). It catalyses the reaction oxidized coenzyme F420-(gamma-L-Glu)(n) + GTP + L-glutamate = oxidized coenzyme F420-(gamma-L-Glu)(n+1) + GDP + phosphate + H(+). The enzyme catalyses oxidized coenzyme F420-0 + FMN + H(+) = dehydro coenzyme F420-0 + FMNH2. It functions in the pathway cofactor biosynthesis; coenzyme F420 biosynthesis. Its function is as follows. Bifunctional enzyme that catalyzes the GTP-dependent successive addition of multiple gamma-linked L-glutamates to the L-lactyl phosphodiester of 7,8-didemethyl-8-hydroxy-5-deazariboflavin (F420-0) to form polyglutamated F420 derivatives, and the FMNH2-dependent reduction of dehydro-F420-0 to form F420-0. The sequence is that of Bifunctional F420 biosynthesis protein FbiB from Mycobacterium tuberculosis (strain ATCC 25177 / H37Ra).